A 103-amino-acid chain; its full sequence is Cell division protein FtsB (103 aa).

Topologically, residues 1–3 (MGK) are cytoplasmic. Residues 4–21 (LTLLLLALLVWLQYSLWF) form a helical membrane-spanning segment. Residues 22–103 (GKNGIHDYSR…RAQTAGQNNR (82 aa)) are Periplasmic-facing. Residues 33 to 62 (NDDVVAQQATNAKLKARNDQLFAEIDDLNG) adopt a coiled-coil conformation.

This sequence belongs to the FtsB family. As to quaternary structure, part of a complex composed of FtsB, FtsL and FtsQ.

It is found in the cell inner membrane. Essential cell division protein. May link together the upstream cell division proteins, which are predominantly cytoplasmic, with the downstream cell division proteins, which are predominantly periplasmic. The polypeptide is Cell division protein FtsB (Salmonella arizonae (strain ATCC BAA-731 / CDC346-86 / RSK2980)).